The following is a 358-amino-acid chain: Fructose-bisphosphate aldolase 7, cytosolic (358 aa).

Serine 2 carries the post-translational modification N-acetylserine. A substrate-binding site is contributed by arginine 52. S-glutathionyl cysteine; transient is present on cysteine 68. Lysine 142 provides a ligand contact to substrate. S-glutathionyl cysteine; transient; alternate is present on cysteine 173. Cysteine 173 bears the S-nitrosocysteine; transient; alternate mark. Glutamate 183 acts as the Proton acceptor in catalysis. Catalysis depends on lysine 225, which acts as the Schiff-base intermediate with dihydroxyacetone-P. Serine 266–isoleucine 268 contributes to the substrate binding site.

Belongs to the class I fructose-bisphosphate aldolase family. Homotetramer. Post-translationally, S-glutathionylated at Cys-68 and Cys-173. S-nitrosylated at Cys-173. As to expression, highly expressed in flowers, and at lower levels in rosettes leaves and cauline leaves.

Its subcellular location is the cytoplasm. The protein localises to the cytosol. The enzyme catalyses beta-D-fructose 1,6-bisphosphate = D-glyceraldehyde 3-phosphate + dihydroxyacetone phosphate. Its pathway is carbohydrate degradation; glycolysis; D-glyceraldehyde 3-phosphate and glycerone phosphate from D-glucose: step 4/4. In terms of biological role, plays a key role in glycolysis and gluconeogenesis. The polypeptide is Fructose-bisphosphate aldolase 7, cytosolic (Arabidopsis thaliana (Mouse-ear cress)).